Consider the following 190-residue polypeptide: Putative manganese efflux pump MntP (190 aa).

6 helical membrane-spanning segments follow: residues 5–25 (ALLA…VATG), 41–61 (WHFG…GQGI), 64–84 (FVDA…GLKM), 105–125 (TSLI…GVTL), 127–147 (MLGL…LGLT), and 169–189 (ILGG…SGVF).

This sequence belongs to the MntP (TC 9.B.29) family.

The protein localises to the cell inner membrane. Its function is as follows. Probably functions as a manganese efflux pump. This is Putative manganese efflux pump MntP from Oleidesulfovibrio alaskensis (strain ATCC BAA-1058 / DSM 17464 / G20) (Desulfovibrio alaskensis).